The sequence spans 282 residues: Bifunctional protein FolD (282 aa).

Residues 165–167 (NRS), S190, and I231 contribute to the NADP(+) site.

The protein belongs to the tetrahydrofolate dehydrogenase/cyclohydrolase family. Homodimer.

It carries out the reaction (6R)-5,10-methylene-5,6,7,8-tetrahydrofolate + NADP(+) = (6R)-5,10-methenyltetrahydrofolate + NADPH. The enzyme catalyses (6R)-5,10-methenyltetrahydrofolate + H2O = (6R)-10-formyltetrahydrofolate + H(+). It functions in the pathway one-carbon metabolism; tetrahydrofolate interconversion. In terms of biological role, catalyzes the oxidation of 5,10-methylenetetrahydrofolate to 5,10-methenyltetrahydrofolate and then the hydrolysis of 5,10-methenyltetrahydrofolate to 10-formyltetrahydrofolate. The protein is Bifunctional protein FolD of Clostridium botulinum (strain 657 / Type Ba4).